The chain runs to 481 residues: Probable Xaa-Pro aminopeptidase PEPP (481 aa).

Residues Asp-265, Asp-276, Glu-399, and Glu-439 each coordinate Mn(2+).

The protein belongs to the peptidase M24B family. The cofactor is Mn(2+).

It carries out the reaction Release of any N-terminal amino acid, including proline, that is linked to proline, even from a dipeptide or tripeptide.. Its function is as follows. Catalyzes the removal of a penultimate prolyl residue from the N-termini of peptides. The sequence is that of Probable Xaa-Pro aminopeptidase PEPP (PEPP) from Uncinocarpus reesii (strain UAMH 1704).